The following is a 519-amino-acid chain: Probable DNA ligase (519 aa).

Glutamate 211 contributes to the ATP binding site. The N6-AMP-lysine intermediate role is filled by lysine 213. Residues arginine 218, arginine 233, glutamate 262, phenylalanine 302, arginine 374, and lysine 380 each coordinate ATP.

Belongs to the ATP-dependent DNA ligase family. Mg(2+) serves as cofactor.

It catalyses the reaction ATP + (deoxyribonucleotide)n-3'-hydroxyl + 5'-phospho-(deoxyribonucleotide)m = (deoxyribonucleotide)n+m + AMP + diphosphate.. In terms of biological role, DNA ligase that seals nicks in double-stranded DNA during DNA replication, DNA recombination and DNA repair. The chain is Probable DNA ligase from Anaeromyxobacter sp. (strain Fw109-5).